We begin with the raw amino-acid sequence, 465 residues long: uncharacterized protein (465 aa).

Positions methionine 1–glutamate 15 are enriched in basic and acidic residues. Disordered regions lie at residues methionine 1–serine 31 and glutamine 288–proline 320.

This is an uncharacterized protein from Dictyostelium discoideum (Social amoeba).